A 1030-amino-acid polypeptide reads, in one-letter code: Putative pentatricopeptide repeat-containing protein At5g06400, mitochondrial (1030 aa).

The N-terminal 77 residues, 1 to 77 (MKALFRFKSC…VKLDETTRLR (77 aa)), are a transit peptide targeting the mitochondrion. PPR repeat units follow at residues 188-222 (RVGI…GCDK), 223-257 (DIRT…GFEL), 258-292 (DATA…GITF), 293-323 (GLRT…MVRI), 328-362 (EHDA…EMCL), 363-393 (DAKY…MKRR), 397-431 (DSNV…GRPP), 432-466 (RVST…GIEP), 467-501 (DSVA…GIKP), 502-536 (TWKS…KIVI), 677-711 (NSEA…GCLI), 712-746 (TQDT…GLIP), 747-783 (SSST…GFVP), 784-814 (DREL…LGKI), 818-852 (VTVA…RSLL), 853-887 (DQYT…GTKP), 888-922 (GVHV…SCEP), 923-957 (SVVT…GTSP), and 958-992 (DFKT…GIAP).

Belongs to the PPR family. P subfamily.

Its subcellular location is the mitochondrion. This chain is Putative pentatricopeptide repeat-containing protein At5g06400, mitochondrial, found in Arabidopsis thaliana (Mouse-ear cress).